The sequence spans 319 residues: GPI-specific phospholipase A2-like PGAP3 (319 aa).

An N-terminal signal peptide occupies residues 1-23; that stretch reads MAGRTARLVLLAGAAALASGSQG. Topologically, residues 24 to 101 are lumenal; the sequence is DREPVYRDCV…GKWPFSRFLC (78 aa). Asn-40 is a glycosylation site (N-linked (GlcNAc...) asparagine). The helical transmembrane segment at 102–122 threads the bilayer; it reads FQEPASAVASFLNGLASLVML. Topologically, residues 123-135 are cytoplasmic; the sequence is CRYRTSVPASSPM. Residues 136–156 traverse the membrane as a helical segment; that stretch reads YPTCVAFAWVSLNAWFWSTVF. Residues 157 to 169 lie on the Lumenal side of the membrane; that stretch reads HTRDTDLTEKMDY. The helical transmembrane segment at 170-190 threads the bilayer; sequence FCASTVILHSIYLCCVRTVGL. The Cytoplasmic segment spans residues 191 to 200; it reads QHPAMASAFR. A helical transmembrane segment spans residues 201-221; that stretch reads ALLLLLLTAHVSYLSLIHFDY. Residues 222-224 are Lumenal-facing; that stretch reads GYN. The chain crosses the membrane as a helical span at residues 225–245; the sequence is MAANVAIGLLNAAWWLAWCLW. At 246 to 257 the chain is on the cytoplasmic side; sequence NQRLPHVHKCVA. Residues 258–278 traverse the membrane as a helical segment; sequence VVLLLQGLSLLELLDFPPLFW. Over 279–281 the chain is Lumenal; the sequence is VLD. Residues 282 to 302 traverse the membrane as a helical segment; that stretch reads AHAIWHISTIPVHVLFFSFLE. Topologically, residues 303-319 are cytoplasmic; it reads DDSLYLLKESEAKVKLD.

It belongs to the PGAP3 family.

It is found in the golgi apparatus membrane. Involved in the fatty acid remodeling steps of GPI-anchor maturation where the unsaturated acyl chain at sn-2 of inositol phosphate is replaced by a saturated stearoyl chain. May catalyze the first step of the fatty acid remodeling, by removing the unsaturated acyl chain at sn-2 of inositol phosphate, generating a lyso-GPI intermediate. The fatty acid remodeling steps is critical for the integration of GPI-APs into lipid rafts. This chain is GPI-specific phospholipase A2-like PGAP3, found in Bos taurus (Bovine).